We begin with the raw amino-acid sequence, 257 residues long: Type III pantothenate kinase (257 aa).

24–31 (MIGNSRLH) is a binding site for ATP. Residues Tyr96 and 100–103 (GIDR) each bind substrate. Catalysis depends on Asp102, which acts as the Proton acceptor. Asp122 serves as a coordination point for K(+). Thr125 provides a ligand contact to ATP. Thr180 is a substrate binding site.

Belongs to the type III pantothenate kinase family. In terms of assembly, homodimer. It depends on NH4(+) as a cofactor. Requires K(+) as cofactor.

It localises to the cytoplasm. The enzyme catalyses (R)-pantothenate + ATP = (R)-4'-phosphopantothenate + ADP + H(+). It participates in cofactor biosynthesis; coenzyme A biosynthesis; CoA from (R)-pantothenate: step 1/5. Functionally, catalyzes the phosphorylation of pantothenate (Pan), the first step in CoA biosynthesis. This chain is Type III pantothenate kinase, found in Synechocystis sp. (strain ATCC 27184 / PCC 6803 / Kazusa).